The following is an 85-amino-acid chain: Latartoxin-1a (85 aa).

The signal sequence occupies residues 1-19 (MKVLVFAIVCSVLLQVVLS). Positions 20-25 (ADEEAR) are cleaved as a propeptide — removed in mature form. The Processing quadruplet motif signature appears at 22–25 (EEAR). Intrachain disulfides connect Cys-27–Cys-42, Cys-34–Cys-47, Cys-41–Cys-64, and Cys-49–Cys-62.

It belongs to the neurotoxin 19 (CSTX) family. Post-translationally, contains 4 disulfide bonds. Cleavage of the propeptide depends on the processing quadruplet motif (XXXR, with at least one of X being E). Expressed by the venom gland.

It is found in the secreted. Functionally, insect toxin. Causes paralysis in larvae of C.vicina by depolarizing membranes at the neuromuscular junction. The sequence is that of Latartoxin-1a from Lachesana tarabaevi (Spider).